The following is a 390-amino-acid chain: RNA-binding motif protein, X chromosome (390 aa).

Met-1 carries the post-translational modification N-acetylmethionine; in Heterogeneous nuclear ribonucleoprotein G; alternate. N-acetylvaline; in Heterogeneous nuclear ribonucleoprotein G, N-terminally processed is present on Val-2. Residues 8–86 (GKLFIGGLNT…KAIKVEQATK (79 aa)) form the RRM domain. A Glycyl lysine isopeptide (Lys-Gly) (interchain with G-Cter in SUMO2) cross-link involves residue Lys-22. Lys-30 carries the post-translational modification N6-acetyllysine. Residues 58–390 (SPADAKDAAR…RSDRGGRSRY (333 aa)) are disordered. A compositionally biased stretch (basic and acidic residues) spans 60–80 (ADAKDAARDMNGKSLDGKAIK). Residues Lys-80 and Lys-86 each participate in a glycyl lysine isopeptide (Lys-Gly) (interchain with G-Cter in SUMO2) cross-link. Phosphoserine occurs at positions 88 and 91. The span at 109-120 (LRGGRGGSGGTR) shows a compositional bias: gly residues. Omega-N-methylarginine occurs at positions 125, 144, and 164. The segment covering 151-164 (RGPPPRSGGPPPKR) has biased composition (pro residues). At Ser-165 the chain carries Phosphoserine. Arg-172 is modified (omega-N-methylarginine). Ser-174 is modified (phosphoserine). Composition is skewed to basic and acidic residues over residues 194 to 215 (PRRE…DGYS) and 241 to 274 (YTYR…DYSD). 4 positions are modified to phosphoserine: Ser-261, Ser-329, Ser-330, and Ser-332. The span at 323–337 (SRDSYTSSRSDLYSS) shows a compositional bias: low complexity. Basic and acidic residues predominate over residues 338–347 (GRDRVGRQER). Ser-352 carries the post-translational modification Phosphoserine. A compositionally biased stretch (low complexity) spans 362–371 (DSYSSSSRGA). A compositionally biased stretch (basic and acidic residues) spans 380 to 390 (SRSDRGGRSRY).

As to quaternary structure, homomultimer. Found in the supraspliceosome complex Identified in the spliceosome C complex. Interacts with KHDRBS3. Forms a complex with ILF2, ILF3, YLPM1, KHDRBS1, NCOA5 and PPP1CA. Interacts with SAFB/SAFB1. Interacts with ERAP1; the interaction is RNA-independent. Interacts with CLK2, KHDRBS2, SAFB, TRA2B and YTHDC1. Interacts with PPIA/CYPA. In terms of processing, O-glycosylated. Arg-182 is dimethylated, probably to asymmetric dimethylarginine. In terms of tissue distribution, expressed in brain, spleen, lung, liver, kidney, testis and heart. Weakly expressed in skeletal muscle (at protein level).

It localises to the nucleus. Its function is as follows. RNA-binding protein that plays several role in the regulation of pre- and post-transcriptional processes. Implicated in tissue-specific regulation of gene transcription and alternative splicing of several pre-mRNAs. Binds to and stimulates transcription from the tumor suppressor TXNIP gene promoter; may thus be involved in tumor suppression. When associated with SAFB, binds to and stimulates transcription from the SREBF1 promoter. Associates with nascent mRNAs transcribed by RNA polymerase II. Component of the supraspliceosome complex that regulates pre-mRNA alternative splice site selection. Can either activate or suppress exon inclusion; acts additively with TRA2B to promote exon 7 inclusion of the survival motor neuron SMN. Represses the splicing of MAPT/Tau exon 10. Binds preferentially to single-stranded 5'-CC[A/C]-rich RNA sequence motifs localized in a single-stranded conformation; probably binds RNA as a homodimer. Binds non-specifically to pre-mRNAs. Also plays a role in the cytoplasmic TNFR1 trafficking pathways; promotes both the IL-1-beta-mediated inducible proteolytic cleavage of TNFR1 ectodomains and the release of TNFR1 exosome-like vesicles to the extracellular compartment. This chain is RNA-binding motif protein, X chromosome (Rbmx), found in Rattus norvegicus (Rat).